Here is a 433-residue protein sequence, read N- to C-terminus: Enolase (433 aa).

Residue Q167 participates in (2R)-2-phosphoglycerate binding. Residue E209 is the Proton donor of the active site. Mg(2+) is bound by residues D246, E291, and D318. Residues K343, R372, S373, and K394 each coordinate (2R)-2-phosphoglycerate. K343 (proton acceptor) is an active-site residue.

The protein belongs to the enolase family. As to quaternary structure, component of the RNA degradosome, a multiprotein complex involved in RNA processing and mRNA degradation. The cofactor is Mg(2+).

The protein localises to the cytoplasm. The protein resides in the secreted. It localises to the cell surface. The enzyme catalyses (2R)-2-phosphoglycerate = phosphoenolpyruvate + H2O. It functions in the pathway carbohydrate degradation; glycolysis; pyruvate from D-glyceraldehyde 3-phosphate: step 4/5. In terms of biological role, catalyzes the reversible conversion of 2-phosphoglycerate (2-PG) into phosphoenolpyruvate (PEP). It is essential for the degradation of carbohydrates via glycolysis. This chain is Enolase, found in Photobacterium profundum (strain SS9).